The following is a 143-amino-acid chain: MKVEAVVEVRYTEDKAKVLKALENVFTPKRVEERESDSGMLLVASCEGAGCLEKLRSAIWRQGIQDAARSVLSKGVVGEDTVVFSVNKQAAYVGVVSFVTEPGESPLGPITFTVKTNNVRQFLDWLAPRTYRGRVYYEAPPPD.

It belongs to the UPF0201 family.

This chain is UPF0201 protein Tneu_0685, found in Pyrobaculum neutrophilum (strain DSM 2338 / JCM 9278 / NBRC 100436 / V24Sta) (Thermoproteus neutrophilus).